We begin with the raw amino-acid sequence, 448 residues long: uncharacterized protein (448 aa).

257–264 is an ATP binding site; that stretch reads GRNAQGKT.

This is an uncharacterized protein from Methanocaldococcus jannaschii (strain ATCC 43067 / DSM 2661 / JAL-1 / JCM 10045 / NBRC 100440) (Methanococcus jannaschii).